Here is a 498-residue protein sequence, read N- to C-terminus: ATP synthase subunit beta, chloroplastic (498 aa).

172–179 (GGAGVGKT) contacts ATP.

Belongs to the ATPase alpha/beta chains family. As to quaternary structure, F-type ATPases have 2 components, CF(1) - the catalytic core - and CF(0) - the membrane proton channel. CF(1) has five subunits: alpha(3), beta(3), gamma(1), delta(1), epsilon(1). CF(0) has four main subunits: a(1), b(1), b'(1) and c(9-12).

It localises to the plastid. The protein localises to the chloroplast thylakoid membrane. The catalysed reaction is ATP + H2O + 4 H(+)(in) = ADP + phosphate + 5 H(+)(out). In terms of biological role, produces ATP from ADP in the presence of a proton gradient across the membrane. The catalytic sites are hosted primarily by the beta subunits. The protein is ATP synthase subunit beta, chloroplastic of Nypa fruticans (Nypa palm).